A 148-amino-acid polypeptide reads, in one-letter code: 3-hydroxyacyl-[acyl-carrier-protein] dehydratase FabZ (148 aa).

His-48 is an active-site residue.

It belongs to the thioester dehydratase family. FabZ subfamily.

It is found in the cytoplasm. The catalysed reaction is a (3R)-hydroxyacyl-[ACP] = a (2E)-enoyl-[ACP] + H2O. Functionally, involved in unsaturated fatty acids biosynthesis. Catalyzes the dehydration of short chain beta-hydroxyacyl-ACPs and long chain saturated and unsaturated beta-hydroxyacyl-ACPs. The sequence is that of 3-hydroxyacyl-[acyl-carrier-protein] dehydratase FabZ from Campylobacter fetus subsp. fetus (strain 82-40).